Reading from the N-terminus, the 213-residue chain is 24 kDa ookinete surface protein (213 aa).

The signal sequence occupies residues 1–28; that stretch reads MNFKYSFIFLFFIQLAIRYNNAKITVDT. The region spanning 30–59 is the EGF-like 1; truncated domain; sequence CKGGKLIQMSNHYECKCPSGYALKTENTCE. 2 consecutive EGF-like domains span residues 60-108 and 108-148; these read PIVK…NICK and KPTR…GKCT. 6 disulfide bridges follow: Cys-64–Cys-80, Cys-74–Cys-94, Cys-96–Cys-107, Cys-112–Cys-122, Cys-117–Cys-134, and Cys-136–Cys-147. In terms of domain architecture, EGF-like 4; truncated spans 151-175; sequence GETKCLLKCKAAEECKLTGKHYECV. A lipid anchor (GPI-anchor amidated asparagine) is attached at Asn-190. N-linked (GlcNAc...) asparagine glycosylation is present at Asn-190. A propeptide spans 191-213 (removed in mature form); it reads SSFMNGMSIISIIALLVIYVIVM.

It is found in the cell membrane. This is 24 kDa ookinete surface protein from Plasmodium berghei (strain Anka).